We begin with the raw amino-acid sequence, 896 residues long: NEDD4-binding protein 1 (896 aa).

Positions 59–143 constitute a KH-like domain; it reads QEAVHSAKEY…IQQFVKLFEN (85 aa). Residue Ser-226 is modified to Phosphoserine. Thr-242 carries the post-translational modification Phosphothreonine. 2 positions are modified to phosphoserine: Ser-258 and Ser-300. 2 disordered regions span residues 403-430 and 488-507; these read YPET…PKKT and ETDG…VNFV. A compositionally biased stretch (polar residues) spans 414-430; it reads VYSSTNELTTDSTPKKT. Ser-562 bears the Phosphoserine mark. The 153-residue stretch at 617 to 769 folds into the RNase NYN domain; the sequence is LKHIVIDGSN…LGRSGPRLEE (153 aa). Residues 801-821 form a disordered region; the sequence is GTQAASTSHQPPTRIQGAPSS. The segment covering 803–813 has biased composition (polar residues); sequence QAASTSHQPPT. Residues 849–896 form a coCUN region; sequence RSSAETNELREALLKIFPDSEQRLKIDQILVAHPYMKDLNALSAMVLD.

This sequence belongs to the N4BP1 family. In terms of assembly, interacts with NEDD4. Interacts with ITCH (via WW domain 2). Proteolytically cleaved by CASP8 downstream of TLR3 or TLR4, leading to its inactivation. Mainly cleaved at Asp-490 by CASP8. Cleaved by caspase-like protein MALT1 in T-cells following TCR-mediated activation, leading to its inactivation and subsequent viral reactivation during HIV-1 infection. Post-translationally, mono- and polyubiquitinated on the CoCUN region. Monoubiquitinated by NEDD4. Polyubiquitinated, leading to its degradation by the proteasome. Sumoylated with SUMO1, abrogating polyubiquitination and subsequent degradation. Desumoylated by SENP1, leading to accumulation in PML nuclear bodies. As to expression, detected in heart, lung, brain, liver, skeletal muscle, pancreas, kidney, spleen, testis and ovary.

It is found in the cytoplasm. The protein resides in the cytosol. Its subcellular location is the nucleus. It localises to the nucleolus. The protein localises to the PML body. Proteolytic cleavage by CASP8 or MALT1 leads to its inactivation. Potent suppressor of cytokine production that acts as a regulator of innate immune signaling and inflammation. Acts as a key negative regulator of select cytokine and chemokine responses elicited by TRIF-independent Toll-like receptors (TLRs), thereby limiting inflammatory cytokine responses to minor insults. In response to more threatening pathogens, cleaved by CASP8 downstream of TLR3 or TLR4, leading to its inactivation, thereby allowing production of inflammatory cytokines. Acts as a restriction factor against some viruses, such as HIV-1: restricts HIV-1 replication by binding to HIV-1 mRNAs and mediating their degradation via its ribonuclease activity. Also acts as an inhibitor of the E3 ubiquitin-protein ligase ITCH: acts by interacting with the second WW domain of ITCH, leading to compete with ITCH's substrates and impairing ubiquitination of substrates. The polypeptide is NEDD4-binding protein 1 (Homo sapiens (Human)).